A 199-amino-acid chain; its full sequence is Ribonuclease P protein component 3 (199 aa).

The protein belongs to the eukaryotic/archaeal RNase P protein component 3 family. In terms of assembly, consists of a catalytic RNA component and at least 4-5 protein subunits.

The protein resides in the cytoplasm. It catalyses the reaction Endonucleolytic cleavage of RNA, removing 5'-extranucleotides from tRNA precursor.. Its function is as follows. Part of ribonuclease P, a protein complex that generates mature tRNA molecules by cleaving their 5'-ends. The chain is Ribonuclease P protein component 3 from Archaeoglobus fulgidus (strain ATCC 49558 / DSM 4304 / JCM 9628 / NBRC 100126 / VC-16).